Consider the following 1261-residue polypeptide: SNF2 domain-containing protein CLASSY 2 (1261 aa).

The disordered stretch occupies residues 458 to 479; it reads FQKRTSRSSRSVAPKTEDSDEP. The region spanning 704–904 is the Helicase ATP-binding domain; the sequence is DPTSGNIGGC…FNTLCLARPK (201 aa). Position 717–724 (717–724) interacts with ATP; sequence HSPGAGKT. The DEAH box signature appears at 855–858; sequence DEGH. Residues 1067-1232 form the Helicase C-terminal domain; it reads FVLNLIFRVV…DPSLWQAEKI (166 aa).

It belongs to the helicase family. In terms of assembly, interacts with NRPD1 and SHH1.

Its subcellular location is the nucleus. Functionally, probable chromatin remodeling factor. This chain is SNF2 domain-containing protein CLASSY 2 (CLSY2), found in Arabidopsis thaliana (Mouse-ear cress).